The following is a 600-amino-acid chain: Elongation factor 4 (600 aa).

Positions 5–187 (SNIRNFSIIA…ALVERIPAPT (183 aa)) constitute a tr-type G domain. Residues 17-22 (DHGKST) and 134-137 (NKID) contribute to the GTP site.

The protein belongs to the TRAFAC class translation factor GTPase superfamily. Classic translation factor GTPase family. LepA subfamily.

The protein localises to the cell inner membrane. The catalysed reaction is GTP + H2O = GDP + phosphate + H(+). Required for accurate and efficient protein synthesis under certain stress conditions. May act as a fidelity factor of the translation reaction, by catalyzing a one-codon backward translocation of tRNAs on improperly translocated ribosomes. Back-translocation proceeds from a post-translocation (POST) complex to a pre-translocation (PRE) complex, thus giving elongation factor G a second chance to translocate the tRNAs correctly. Binds to ribosomes in a GTP-dependent manner. In Psychrobacter sp. (strain PRwf-1), this protein is Elongation factor 4.